The sequence spans 510 residues: Lysine--tRNA ligase (510 aa).

Residues E420 and E427 each contribute to the Mg(2+) site.

The protein belongs to the class-II aminoacyl-tRNA synthetase family. As to quaternary structure, homodimer. Mg(2+) is required as a cofactor.

Its subcellular location is the cytoplasm. The enzyme catalyses tRNA(Lys) + L-lysine + ATP = L-lysyl-tRNA(Lys) + AMP + diphosphate. This Psychrobacter sp. (strain PRwf-1) protein is Lysine--tRNA ligase.